A 421-amino-acid polypeptide reads, in one-letter code: Medium-chain specific acyl-CoA dehydrogenase, mitochondrial (421 aa).

The transit peptide at 1 to 25 directs the protein to the mitochondrion; sequence MAAAFGRCCRVLRSISRFHWRSQHT. An N6-acetyllysine; alternate modification is found at lysine 69. Lysine 69 is modified (N6-succinyllysine; alternate). 158–167 serves as a coordination point for FAD; that stretch reads YCVTEPGAGS. An octanoyl-CoA-binding site is contributed by serine 167. Lysine 179 bears the N6-succinyllysine mark. 191–193 contributes to the FAD binding site; that stretch reads WIT. 4 positions are modified to N6-acetyllysine; alternate: lysine 212, lysine 217, lysine 259, and lysine 271. An N6-succinyllysine; alternate mark is found at lysine 212, lysine 217, lysine 259, and lysine 271. Octanoyl-CoA is bound at residue aspartate 278. Lysine 279 bears the N6-acetyllysine mark. Arginine 281 contacts octanoyl-CoA. An N6-acetyllysine modification is found at lysine 301. Residues 306–308 and 316–317 each bind FAD; these read RKT and HQ. The octanoyl-CoA site is built by arginine 349 and threonine 351. A Phosphothreonine modification is found at threonine 351. 374-378 contacts FAD; it reads QIFGG. Octanoyl-CoA is bound at residue glutamate 401. The active-site Proton acceptor is glutamate 401. 402-405 lines the FAD pocket; that stretch reads GTSQ.

This sequence belongs to the acyl-CoA dehydrogenase family. In terms of assembly, homotetramer. Interacts with the heterodimeric electron transfer flavoprotein ETF. Requires FAD as cofactor. Acetylated. Could occur at proximity of the cofactor-binding sites and reduce the catalytic activity. Could be deacetylated by SIRT3.

Its subcellular location is the mitochondrion matrix. The enzyme catalyses a medium-chain 2,3-saturated fatty acyl-CoA + oxidized [electron-transfer flavoprotein] + H(+) = a medium-chain (2E)-enoyl-CoA + reduced [electron-transfer flavoprotein]. It carries out the reaction pentanoyl-CoA + oxidized [electron-transfer flavoprotein] + H(+) = (2E)-pentenoyl-CoA + reduced [electron-transfer flavoprotein]. It catalyses the reaction hexanoyl-CoA + oxidized [electron-transfer flavoprotein] + H(+) = (2E)-hexenoyl-CoA + reduced [electron-transfer flavoprotein]. The catalysed reaction is octanoyl-CoA + oxidized [electron-transfer flavoprotein] + H(+) = (2E)-octenoyl-CoA + reduced [electron-transfer flavoprotein]. The enzyme catalyses decanoyl-CoA + oxidized [electron-transfer flavoprotein] + H(+) = (2E)-decenoyl-CoA + reduced [electron-transfer flavoprotein]. It carries out the reaction dodecanoyl-CoA + oxidized [electron-transfer flavoprotein] + H(+) = (2E)-dodecenoyl-CoA + reduced [electron-transfer flavoprotein]. It catalyses the reaction tetradecanoyl-CoA + oxidized [electron-transfer flavoprotein] + H(+) = (2E)-tetradecenoyl-CoA + reduced [electron-transfer flavoprotein]. The catalysed reaction is oxidized [electron-transfer flavoprotein] + hexadecanoyl-CoA + H(+) = (2E)-hexadecenoyl-CoA + reduced [electron-transfer flavoprotein]. Its pathway is lipid metabolism; mitochondrial fatty acid beta-oxidation. Functionally, medium-chain specific acyl-CoA dehydrogenase is one of the acyl-CoA dehydrogenases that catalyze the first step of mitochondrial fatty acid beta-oxidation, an aerobic process breaking down fatty acids into acetyl-CoA and allowing the production of energy from fats. The first step of fatty acid beta-oxidation consists in the removal of one hydrogen from C-2 and C-3 of the straight-chain fatty acyl-CoA thioester, resulting in the formation of trans-2-enoyl-CoA. Electron transfer flavoprotein (ETF) is the electron acceptor that transfers electrons to the main mitochondrial respiratory chain via ETF-ubiquinone oxidoreductase (ETF dehydrogenase). Among the different mitochondrial acyl-CoA dehydrogenases, medium-chain specific acyl-CoA dehydrogenase acts specifically on acyl-CoAs with saturated 6 to 12 carbons long primary chains. The chain is Medium-chain specific acyl-CoA dehydrogenase, mitochondrial from Macaca fascicularis (Crab-eating macaque).